A 219-amino-acid chain; its full sequence is Protein-L-isoaspartate O-methyltransferase (219 aa).

The active site involves Ser-65.

Belongs to the methyltransferase superfamily. L-isoaspartyl/D-aspartyl protein methyltransferase family. As to quaternary structure, monomer.

It localises to the cytoplasm. The enzyme catalyses [protein]-L-isoaspartate + S-adenosyl-L-methionine = [protein]-L-isoaspartate alpha-methyl ester + S-adenosyl-L-homocysteine. Catalyzes the methyl esterification of L-isoaspartyl residues in peptides and proteins that result from spontaneous decomposition of normal L-aspartyl and L-asparaginyl residues. It plays a role in the repair and/or degradation of damaged proteins. This is Protein-L-isoaspartate O-methyltransferase (pcm) from Pyrococcus furiosus (strain ATCC 43587 / DSM 3638 / JCM 8422 / Vc1).